The sequence spans 125 residues: MIYGIGIDIVEINRIKKIVIRSGDKLAKRILRKSELKLYYSKEYPVRFLSKRFAAKEAVLKAFGTGMSQGITFSQFEIFNDDLGRPMLRFFSQAAVLAKKLDLVRTHVSVSDTGLYACSIVIFEC.

Residues aspartate 8 and glutamate 57 each contribute to the Mg(2+) site.

This sequence belongs to the P-Pant transferase superfamily. AcpS family. Mg(2+) is required as a cofactor.

It localises to the cytoplasm. The enzyme catalyses apo-[ACP] + CoA = holo-[ACP] + adenosine 3',5'-bisphosphate + H(+). In terms of biological role, transfers the 4'-phosphopantetheine moiety from coenzyme A to a Ser of acyl-carrier-protein. This chain is Holo-[acyl-carrier-protein] synthase, found in Blochmanniella floridana.